Consider the following 319-residue polypeptide: MENFPIINLENLCGAERDATMEMIKDACENWGFFELVNHGIPHEVMDTVEKFTKGHYKKCMEQRFKELVASKGLEAVQAEVTDLDWESTFFLRHLPVSNISEVPDLDDEYREVMRDFAKRLEKLAEELLDLLCENLGLEKGYLKKAFYGSKGPNFGTKVSNYPPCPKPDLIKGLRAHTDAGGIILLFQDDKVSGLQLLKDDQWIDVPPMRHSIVINLGDQLEVITNGKYKSVPHRVIAQTDGTRMSLASFYNPASDAVIYPAPALVERDAEENKQIYPKFVFDDYMKLYARLKFQAKEPRFEAMKAMEADVKIDPVATV.

The region spanning P153–P253 is the Fe2OG dioxygenase domain. Residues H177, D179, and H234 each coordinate Fe cation.

This sequence belongs to the iron/ascorbate-dependent oxidoreductase family. It depends on Fe cation as a cofactor.

It catalyses the reaction 1-aminocyclopropane-1-carboxylate + L-ascorbate + O2 = ethene + L-dehydroascorbate + hydrogen cyanide + CO2 + 2 H2O. The protein operates within alkene biosynthesis; ethylene biosynthesis via S-adenosyl-L-methionine; ethylene from S-adenosyl-L-methionine: step 2/2. This chain is 1-aminocyclopropane-1-carboxylate oxidase 4 (ACO4), found in Petunia hybrida (Petunia).